The chain runs to 145 residues: D-aminoacyl-tRNA deacylase (145 aa).

A Gly-cisPro motif, important for rejection of L-amino acids motif is present at residues 137 to 138 (GP).

The protein belongs to the DTD family. Homodimer.

The protein resides in the cytoplasm. It catalyses the reaction glycyl-tRNA(Ala) + H2O = tRNA(Ala) + glycine + H(+). The enzyme catalyses a D-aminoacyl-tRNA + H2O = a tRNA + a D-alpha-amino acid + H(+). Its function is as follows. An aminoacyl-tRNA editing enzyme that deacylates mischarged D-aminoacyl-tRNAs. Also deacylates mischarged glycyl-tRNA(Ala), protecting cells against glycine mischarging by AlaRS. Acts via tRNA-based rather than protein-based catalysis; rejects L-amino acids rather than detecting D-amino acids in the active site. By recycling D-aminoacyl-tRNA to D-amino acids and free tRNA molecules, this enzyme counteracts the toxicity associated with the formation of D-aminoacyl-tRNA entities in vivo and helps enforce protein L-homochirality. The sequence is that of D-aminoacyl-tRNA deacylase from Azotobacter vinelandii (strain DJ / ATCC BAA-1303).